The following is a 309-amino-acid chain: MDDKAFTKDLDQWVEQLNECKQLNENQVRTLCEKAKEILTKESNVQEVRCPVTVCGDVHGQFHDLMELFRIGGKSPDTNYLFMGDYVDRGYYSVETVTLLVALKVRYPERITILRGNHESRQITQVYGFYDECLRKYGNANVWKYFTDLFDYLPLTALVDGQIFCLHGGLSPSIDTLDHIRALDRLQEVPHEGPMCDLLWSDPDDRGGWGISPRGAGYTFGQDISETFNHANGLTLVSRAHQLVMEGYNWCHDRNVVTIFSAPNYCYRCGNQAAIMELDDTLKYSFLQFDPAPRRGEPHVTRRTPDYFL.

Residues aspartate 57, histidine 59, aspartate 85, and asparagine 117 each coordinate Mn(2+). Residue histidine 118 is the Proton donor of the active site. 2 residues coordinate Mn(2+): histidine 167 and histidine 241. At tyrosine 307 the chain carries Phosphotyrosine. Leucine 309 bears the Leucine methyl ester mark.

Belongs to the PPP phosphatase family. PP-1 subfamily. PP2A consists of a common heterodimeric core enzyme (composed of a 36 kDa catalytic subunit (subunit C) and a 65 kDa constant regulatory subunit (PR65) (subunit A)) that associates with a variety of regulatory subunits. Proteins that associate with the core dimer include three families of regulatory subunits B (the R2/B/PR55/B55, R3/B''/PR72/PR130/PR59 and R5/B'/B56 families), the 48 kDa variable regulatory subunit, viral proteins, and cell signaling molecules. Binds PPME1. May indirectly interact with SGO1, most probably through regulatory B56 subunits. Found in a complex with at least ARL2, PPP2CB, PPP2R1A, PPP2R2A, PPP2R5E and TBCD. Interacts with TBCD. Interacts with CTTNBP2NL. Interacts with PTPA. Part of the core of STRIPAK complexes composed of PP2A catalytic and scaffolding subunits, the striatins (PP2A regulatory subunits), the striatin-associated proteins MOB4, STRIP1 and STRIP2, PDCD10 and members of the STE20 kinases, such as STK24 and STK26. It depends on Mn(2+) as a cofactor. Post-translationally, reversibly methyl esterified on Leu-309 by leucine carboxyl methyltransferase 1 (LCMT1) and protein phosphatase methylesterase 1 (PPME1). Carboxyl methylation influences the affinity of the catalytic subunit for the different regulatory subunits, thereby modulating the PP2A holoenzyme's substrate specificity, enzyme activity and cellular localization. Phosphorylation of either threonine (by autophosphorylation-activated protein kinase) or tyrosine results in inactivation of the phosphatase. Auto-dephosphorylation has been suggested as a mechanism for reactivation. In terms of processing, may be monoubiquitinated by NOSIP.

Its subcellular location is the cytoplasm. It is found in the nucleus. It localises to the chromosome. The protein localises to the centromere. The protein resides in the cytoskeleton. Its subcellular location is the spindle pole. The catalysed reaction is O-phospho-L-seryl-[protein] + H2O = L-seryl-[protein] + phosphate. It catalyses the reaction O-phospho-L-threonyl-[protein] + H2O = L-threonyl-[protein] + phosphate. In terms of biological role, catalytic subunit of protein phosphatase 2A (PP2A), a serine/threonine phosphatase involved in the regulation of a wide variety of enzymes, signal transduction pathways, and cellular events. PP2A can modulate the activity of phosphorylase B kinase, casein kinase 2, mitogen-stimulated S6 kinase, and MAP-2 kinase. Part of the striatin-interacting phosphatase and kinase (STRIPAK) complexes. STRIPAK complexes have critical roles in protein (de)phosphorylation and are regulators of multiple signaling pathways including Hippo, MAPK, nuclear receptor and cytoskeleton remodeling. Different types of STRIPAK complexes are involved in a variety of biological processes such as cell growth, differentiation, apoptosis, metabolism and immune regulation. In Bos taurus (Bovine), this protein is Serine/threonine-protein phosphatase 2A catalytic subunit beta isoform (PPP2CB).